The sequence spans 173 residues: MASHEEILADKAIFAYLHRMIGDEGIELIRRFPTDKEYSDEELAEVTKINLNSVRNTLYTLYEHRLAKYRRIKNNETGWLTYLWELELDNMYDSVSKDLEIILEKLRKRYKYESENAFYNCPNCGNTITFSDAMDSQFVCQECENKMVHFDNDLLVNALQKRIARIEENLGHV.

The region spanning 9-92 is the HTH TFE/IIEalpha-type domain; the sequence is ADKAIFAYLH…LWELELDNMY (84 aa).

Belongs to the TFE family. In terms of assembly, monomer. Interaction with RNA polymerase subunits RpoF and RpoE is necessary for Tfe stimulatory transcription activity. Able to interact with Tbp and RNA polymerase in the absence of DNA promoter. Interacts both with the preinitiation and elongation complexes.

Functionally, transcription factor that plays a role in the activation of archaeal genes transcribed by RNA polymerase. Facilitates transcription initiation by enhancing TATA-box recognition by TATA-box-binding protein (Tbp), and transcription factor B (Tfb) and RNA polymerase recruitment. Not absolutely required for transcription in vitro, but particularly important in cases where Tbp or Tfb function is not optimal. It dynamically alters the nucleic acid-binding properties of RNA polymerases by stabilizing the initiation complex and destabilizing elongation complexes. Seems to translocate with the RNA polymerase following initiation and acts by binding to the non template strand of the transcription bubble in elongation complexes. The polypeptide is Transcription factor E (Methanospirillum hungatei JF-1 (strain ATCC 27890 / DSM 864 / NBRC 100397 / JF-1)).